We begin with the raw amino-acid sequence, 734 residues long: Mechanosensitive ion channel protein 10 (734 aa).

Disordered regions lie at residues 1–75 and 115–136; these read MAEQ…LTQR and SFSR…APVT. Basic and acidic residues predominate over residues 24–39; sequence EASRRSKEMASPESEK. Serine 34 bears the Phosphoserine mark. Composition is skewed to polar residues over residues 65-75 and 117-129; these read PNQNNVGLTQR and SRAS…NRSV. A phosphoserine mark is found at serine 128 and serine 131. Helical transmembrane passes span 164-184, 196-216, 249-269, 288-308, 516-536, and 551-571; these read ISTL…ALVA, FWGL…SGML, SVQV…LFNH, LISI…LKIL, LVTA…LEVA, and LAFI…FVFV.

This sequence belongs to the MscS (TC 1.A.23) family. Detected in the root tip and throughout the vasculature of the root and leaf.

It localises to the cell membrane. Functionally, mechanosensitive channel that opens in response to stretch forces in the membrane lipid bilayer. The chain is Mechanosensitive ion channel protein 10 (MSL10) from Arabidopsis thaliana (Mouse-ear cress).